Here is a 329-residue protein sequence, read N- to C-terminus: 4-hydroxythreonine-4-phosphate dehydrogenase (329 aa).

Substrate is bound by residues H136 and T137. Residues H166, H211, and H266 each contribute to the a divalent metal cation site. Residues K274, N283, and R292 each contribute to the substrate site.

It belongs to the PdxA family. As to quaternary structure, homodimer. Requires Zn(2+) as cofactor. The cofactor is Mg(2+). It depends on Co(2+) as a cofactor.

The protein resides in the cytoplasm. It carries out the reaction 4-(phosphooxy)-L-threonine + NAD(+) = 3-amino-2-oxopropyl phosphate + CO2 + NADH. It functions in the pathway cofactor biosynthesis; pyridoxine 5'-phosphate biosynthesis; pyridoxine 5'-phosphate from D-erythrose 4-phosphate: step 4/5. Its function is as follows. Catalyzes the NAD(P)-dependent oxidation of 4-(phosphooxy)-L-threonine (HTP) into 2-amino-3-oxo-4-(phosphooxy)butyric acid which spontaneously decarboxylates to form 3-amino-2-oxopropyl phosphate (AHAP). This is 4-hydroxythreonine-4-phosphate dehydrogenase from Shigella boydii serotype 18 (strain CDC 3083-94 / BS512).